Reading from the N-terminus, the 310-residue chain is Tyrosine recombinase XerC (310 aa).

In terms of domain architecture, Core-binding (CB) spans 1–92 (MDELIKEFDR…SLRAFFKYLH (92 aa)). The region spanning 113–300 (YIPAVLSVDE…SVNRLMAVYD (188 aa)) is the Tyr recombinase domain. Active-site residues include Arg153, Lys177, His252, Arg255, and His278. Tyr287 (O-(3'-phospho-DNA)-tyrosine intermediate) is an active-site residue.

Belongs to the 'phage' integrase family. XerC subfamily. As to quaternary structure, forms a cyclic heterotetrameric complex composed of two molecules of XerC and two molecules of XerD.

It localises to the cytoplasm. In terms of biological role, site-specific tyrosine recombinase, which acts by catalyzing the cutting and rejoining of the recombining DNA molecules. The XerC-XerD complex is essential to convert dimers of the bacterial chromosome into monomers to permit their segregation at cell division. It also contributes to the segregational stability of plasmids. This Syntrophus aciditrophicus (strain SB) protein is Tyrosine recombinase XerC.